The following is a 267-amino-acid chain: Hydroxyethylthiazole kinase (267 aa).

M46 is a binding site for substrate. 2 residues coordinate ATP: R122 and T168. Substrate is bound at residue G195.

The protein belongs to the Thz kinase family. The cofactor is Mg(2+).

The enzyme catalyses 5-(2-hydroxyethyl)-4-methylthiazole + ATP = 4-methyl-5-(2-phosphooxyethyl)-thiazole + ADP + H(+). It participates in cofactor biosynthesis; thiamine diphosphate biosynthesis; 4-methyl-5-(2-phosphoethyl)-thiazole from 5-(2-hydroxyethyl)-4-methylthiazole: step 1/1. Functionally, catalyzes the phosphorylation of the hydroxyl group of 4-methyl-5-beta-hydroxyethylthiazole (THZ). The protein is Hydroxyethylthiazole kinase of Moorella thermoacetica (strain ATCC 39073 / JCM 9320).